The following is a 114-amino-acid chain: Large ribosomal subunit protein bL21 (114 aa).

Belongs to the bacterial ribosomal protein bL21 family. In terms of assembly, part of the 50S ribosomal subunit. Contacts protein L20.

This protein binds to 23S rRNA in the presence of protein L20. This chain is Large ribosomal subunit protein bL21, found in Protochlamydia amoebophila (strain UWE25).